Here is a 398-residue protein sequence, read N- to C-terminus: Dual-specificity RNA methyltransferase RlmN (398 aa).

The active-site Proton acceptor is the glutamate 119. The 240-residue stretch at 125 to 364 (EGDRATLCVS…TIVRKTRGDD (240 aa)) folds into the Radical SAM core domain. A disulfide bridge connects residues cysteine 132 and cysteine 369. The [4Fe-4S] cluster site is built by cysteine 139, cysteine 143, and cysteine 146. Residues 193–194 (GE), serine 225, 247–249 (SLH), and asparagine 326 each bind S-adenosyl-L-methionine. Cysteine 369 acts as the S-methylcysteine intermediate in catalysis.

This sequence belongs to the radical SAM superfamily. RlmN family. It depends on [4Fe-4S] cluster as a cofactor.

Its subcellular location is the cytoplasm. The enzyme catalyses adenosine(2503) in 23S rRNA + 2 reduced [2Fe-2S]-[ferredoxin] + 2 S-adenosyl-L-methionine = 2-methyladenosine(2503) in 23S rRNA + 5'-deoxyadenosine + L-methionine + 2 oxidized [2Fe-2S]-[ferredoxin] + S-adenosyl-L-homocysteine. The catalysed reaction is adenosine(37) in tRNA + 2 reduced [2Fe-2S]-[ferredoxin] + 2 S-adenosyl-L-methionine = 2-methyladenosine(37) in tRNA + 5'-deoxyadenosine + L-methionine + 2 oxidized [2Fe-2S]-[ferredoxin] + S-adenosyl-L-homocysteine. In terms of biological role, specifically methylates position 2 of adenine 2503 in 23S rRNA and position 2 of adenine 37 in tRNAs. m2A2503 modification seems to play a crucial role in the proofreading step occurring at the peptidyl transferase center and thus would serve to optimize ribosomal fidelity. This Yersinia enterocolitica serotype O:8 / biotype 1B (strain NCTC 13174 / 8081) protein is Dual-specificity RNA methyltransferase RlmN.